Here is a 315-residue protein sequence, read N- to C-terminus: Acetyl-coenzyme A carboxylase carboxyl transferase subunit alpha (315 aa).

One can recognise a CoA carboxyltransferase C-terminal domain in the interval 36–289; it reads LGKKRLELME…RKAVAAELKV (254 aa).

Belongs to the AccA family. As to quaternary structure, acetyl-CoA carboxylase is a heterohexamer composed of biotin carboxyl carrier protein (AccB), biotin carboxylase (AccC) and two subunits each of ACCase subunit alpha (AccA) and ACCase subunit beta (AccD).

The protein localises to the cytoplasm. The enzyme catalyses N(6)-carboxybiotinyl-L-lysyl-[protein] + acetyl-CoA = N(6)-biotinyl-L-lysyl-[protein] + malonyl-CoA. It participates in lipid metabolism; malonyl-CoA biosynthesis; malonyl-CoA from acetyl-CoA: step 1/1. In terms of biological role, component of the acetyl coenzyme A carboxylase (ACC) complex. First, biotin carboxylase catalyzes the carboxylation of biotin on its carrier protein (BCCP) and then the CO(2) group is transferred by the carboxyltransferase to acetyl-CoA to form malonyl-CoA. The chain is Acetyl-coenzyme A carboxylase carboxyl transferase subunit alpha from Francisella philomiragia subsp. philomiragia (strain ATCC 25017 / CCUG 19701 / FSC 153 / O#319-036).